We begin with the raw amino-acid sequence, 255 residues long: tRNA (guanine-N(1)-)-methyltransferase (255 aa).

Residues Gly121 and 141–146 contribute to the S-adenosyl-L-methionine site; that span reads IGDYVL. The tract at residues 236-255 is disordered; that stretch reads PVKAPNRAGRQKTPKNKTDG. Positions 244-255 are enriched in basic residues; sequence GRQKTPKNKTDG.

This sequence belongs to the RNA methyltransferase TrmD family. In terms of assembly, homodimer.

Its subcellular location is the cytoplasm. It carries out the reaction guanosine(37) in tRNA + S-adenosyl-L-methionine = N(1)-methylguanosine(37) in tRNA + S-adenosyl-L-homocysteine + H(+). In terms of biological role, specifically methylates guanosine-37 in various tRNAs. This is tRNA (guanine-N(1)-)-methyltransferase from Bradyrhizobium diazoefficiens (strain JCM 10833 / BCRC 13528 / IAM 13628 / NBRC 14792 / USDA 110).